The sequence spans 410 residues: 2-oxoglutarate-dependent dioxygenase AOP3 (410 aa).

The region spanning 258–355 is the Fe2OG dioxygenase domain; that stretch reads GNASVGAKEA…RYAAALFSYP (98 aa). Fe cation contacts are provided by His278, Asp280, and His335. Position 346 (Arg346) interacts with 2-oxoglutarate.

It belongs to the iron/ascorbate-dependent oxidoreductase family. The cofactor is Fe(2+).

Its function is as follows. 2-oxoglutarate-dependent dioxygenase involved in glucosinolates biosynthesis. Catalyzes the conversion of methylsulfinylalkyl glucosinolates to hydroxyalkyl glucosinolates. This is 2-oxoglutarate-dependent dioxygenase AOP3 (AOP3) from Arabidopsis thaliana (Mouse-ear cress).